Reading from the N-terminus, the 218-residue chain is Adenylate kinase (218 aa).

10 to 15 (GAGKGT) contacts ATP. The tract at residues 30–59 (STGDMLRAAVKAGTPLGLEAKKVMDAGGLV) is NMP. AMP-binding positions include threonine 31, arginine 36, 57 to 59 (GLV), 85 to 88 (GFPR), and glutamine 92. Residues 122–159 (GRRVHVASGRTYHVKFNPPKVAGKDDETGEDLIQRADD) form an LID region. ATP is bound by residues arginine 123 and 132-133 (TY). Residues arginine 156 and arginine 167 each coordinate AMP. Residue glycine 203 coordinates ATP.

The protein belongs to the adenylate kinase family. As to quaternary structure, monomer.

Its subcellular location is the cytoplasm. The enzyme catalyses AMP + ATP = 2 ADP. It functions in the pathway purine metabolism; AMP biosynthesis via salvage pathway; AMP from ADP: step 1/1. In terms of biological role, catalyzes the reversible transfer of the terminal phosphate group between ATP and AMP. Plays an important role in cellular energy homeostasis and in adenine nucleotide metabolism. This chain is Adenylate kinase, found in Laribacter hongkongensis (strain HLHK9).